Reading from the N-terminus, the 901-residue chain is MASNIKEQAKKQFELNGQSYTYYDLQTLEEKGLAKISKLPYSIRVLLESVLRQEDDFVITDDHIKALSKFGNAGNEGEVPFKPSRVILQDFTGVPAVVDLASLRKAMNDVGGDINKINPEVPVDLVIDHSVQVDSYANPEALERNMKLEFERNYERYQFLNWATKAFDNYNAVPPATGIVHQVNLEYLANVVHVRDVDGEKTAFPDTLVGTDSHTTMINGIGVLGWGVGGIEAEAGMLGQPSYFPIPEVIGVRLTHSLPQGSTATDLALRVTEELRKKGVVGKFVEFFGPGVQHLPLADRATIANMAPEYGATCGFFPVDEESLKYMKLTGRDEEHIELVKEYLQQNHMFFDVEKEDPEYTDVIDLDLSTVEASLSGPKRPQDLIFLSDMKKEFEKSVTAPAGNQGHGLDQSEFDKKAEINFNDGSKATMKTGDIAIAAITSCTNTSNPYVMLGAGLVAKKAVEKGLKVPEFVKTSLAPGSKVVTGYLRDSGLQQYLDDLGFNLVGYGCTTCIGNSGPLLPEIEKAVADEDLLVTSVLSGNRNFEGRIHPLVKANYLASPQLVVAYALAGTVDIDLQNEPIGKGKDGKDVYLQDIWPSIQEVSDTVDKVVTPELFLEEYKNVYHNNEMWNEIDVTDEPLYDFDPNSTYIQNPTFFQGLSKEPGKIEPLKSLRVMGKFGDSVTTDHISPAGAIGKDTPAGKYLLDHDVAIRNFNSYGSRRGNHEVMVRGTFANIRIKNQLAPGTEGGFTTYWPTGEIMPIYDAAMKYKEDGTGLVVLAGNDYGMGSSRDWAAKGTNLLGVKTVIAQSYERIHRSNLVMMGVLPLQFQQGESAEALGLDGKEEISVDINEDVQPHDLVNVTAKKENGEIINFKAIVRFDSLVELDYYRHGGILQMVLRNKLAQ.

The [4Fe-4S] cluster site is built by Cys-443, Cys-509, and Cys-512.

This sequence belongs to the aconitase/IPM isomerase family. In terms of assembly, monomer. Requires [4Fe-4S] cluster as cofactor.

The enzyme catalyses citrate = D-threo-isocitrate. It catalyses the reaction (2S,3R)-3-hydroxybutane-1,2,3-tricarboxylate = 2-methyl-cis-aconitate + H2O. It functions in the pathway carbohydrate metabolism; tricarboxylic acid cycle; isocitrate from oxaloacetate: step 2/2. Its pathway is organic acid metabolism; propanoate degradation. Its function is as follows. Involved in the catabolism of short chain fatty acids (SCFA) via the tricarboxylic acid (TCA)(acetyl degradation route) and probably the 2-methylcitrate cycle I (propionate degradation route). Catalyzes the reversible isomerization of citrate to isocitrate via cis-aconitate. Could catalyze the hydration of 2-methyl-cis-aconitate to yield (2R,3S)-2-methylisocitrate. The apo form of AcnA functions as a RNA-binding regulatory protein. This chain is Aconitate hydratase A (acnA), found in Staphylococcus epidermidis (strain ATCC 12228 / FDA PCI 1200).